The chain runs to 208 residues: Ras-related protein Rab-6B (208 aa).

Residues 20–27, T45, 68–72, and 126–129 each bind GTP; these read GEQSVGKT, DTAGQ, and NKTD. An Effector region motif is present at residues 42–50; it reads YQATIGIDF. S-geranylgeranyl cysteine attachment occurs at residues C206 and C208. At C208 the chain carries Cysteine methyl ester.

It belongs to the small GTPase superfamily. Rab family. As to quaternary structure, interacts (GTP-bound) with BICD1 (via C-terminus); the interaction is direct. Interacts (GDP-bound) with DYNLRB1. Interacts (GTP-bound) with APBA1/MINT1. Interacts (GTP-bound) with VPS13B.

The protein resides in the golgi apparatus membrane. The protein localises to the endoplasmic reticulum-Golgi intermediate compartment. It localises to the cytoplasmic vesicle. It catalyses the reaction GTP + H2O = GDP + phosphate + H(+). With respect to regulation, regulated by guanine nucleotide exchange factors (GEFs) which promote the exchange of bound GDP for free GTP, GTPase activating proteins (GAPs) which increase the GTP hydrolysis activity, and GDP dissociation inhibitors which inhibit the dissociation of the nucleotide from the GTPase. Its function is as follows. The small GTPases Rab are key regulators of intracellular membrane trafficking, from the formation of transport vesicles to their fusion with membranes. Rabs cycle between active GTP-bound and inactive GDP-bound states. In their active state, drive transport of vesicular carriers from donor organelles to acceptor organelles to regulate the membrane traffic that maintains organelle identity and morphology. Recruits VPS13B to the Golgi membrane. Regulates the compacted morphology of the Golgi. Seems to have a role in retrograde membrane traffic at the level of the Golgi complex. May function in retrograde transport in neuronal cells. Plays a role in neuron projection development. This Bos taurus (Bovine) protein is Ras-related protein Rab-6B (RAB6B).